The primary structure comprises 427 residues: UPF0229 protein YeaH (427 aa).

The segment covering 79–90 has biased composition (basic and acidic residues); it reads NDHFVQNDRIER. A disordered region spans residues 79-110; the sequence is NDHFVQNDRIERPQGGGGGSGSGQGQASQDGE. A compositionally biased stretch (gly residues) spans 92-102; that stretch reads QGGGGGSGSGQ.

This sequence belongs to the UPF0229 family.

This Shigella boydii serotype 18 (strain CDC 3083-94 / BS512) protein is UPF0229 protein YeaH.